Reading from the N-terminus, the 274-residue chain is tRNA-cytidine(32) 2-sulfurtransferase (274 aa).

Residues 40–45 (SGGKDS) carry the PP-loop motif motif. Residues C115, C118, and C206 each coordinate [4Fe-4S] cluster.

Belongs to the TtcA family. Homodimer. Mg(2+) serves as cofactor. It depends on [4Fe-4S] cluster as a cofactor.

The protein localises to the cytoplasm. The catalysed reaction is cytidine(32) in tRNA + S-sulfanyl-L-cysteinyl-[cysteine desulfurase] + AH2 + ATP = 2-thiocytidine(32) in tRNA + L-cysteinyl-[cysteine desulfurase] + A + AMP + diphosphate + H(+). The protein operates within tRNA modification. Catalyzes the ATP-dependent 2-thiolation of cytidine in position 32 of tRNA, to form 2-thiocytidine (s(2)C32). The sulfur atoms are provided by the cysteine/cysteine desulfurase (IscS) system. The protein is tRNA-cytidine(32) 2-sulfurtransferase of Pseudomonas syringae pv. tomato (strain ATCC BAA-871 / DC3000).